Here is a 404-residue protein sequence, read N- to C-terminus: Sulfate adenylyltransferase (404 aa).

This sequence belongs to the sulfate adenylyltransferase family.

It catalyses the reaction sulfate + ATP + H(+) = adenosine 5'-phosphosulfate + diphosphate. It functions in the pathway sulfur metabolism; hydrogen sulfide biosynthesis; sulfite from sulfate: step 1/3. The protein is Sulfate adenylyltransferase of Chlorobium chlorochromatii (strain CaD3).